Reading from the N-terminus, the 302-residue chain is tRNA dimethylallyltransferase (302 aa).

ATP is bound at residue 2-9 (GPTACGKS). 4-9 (TACGKS) contributes to the substrate binding site. Interaction with substrate tRNA regions lie at residues 27–30 (DSAL) and 149–153 (QRLIR).

Belongs to the IPP transferase family. As to quaternary structure, monomer. It depends on Mg(2+) as a cofactor.

It carries out the reaction adenosine(37) in tRNA + dimethylallyl diphosphate = N(6)-dimethylallyladenosine(37) in tRNA + diphosphate. Functionally, catalyzes the transfer of a dimethylallyl group onto the adenine at position 37 in tRNAs that read codons beginning with uridine, leading to the formation of N6-(dimethylallyl)adenosine (i(6)A). The sequence is that of tRNA dimethylallyltransferase from Buchnera aphidicola subsp. Acyrthosiphon pisum (strain 5A).